Consider the following 376-residue polypeptide: MSKRFMITAGGTGGHIFPAQGLAQELIKKTYSSSILFVAGGLSTNKYFDRSIFPFQEVSASPLFSKNPFKLLKGVFNLLRGVWQSIRIIRKFKPDVVVGFGSYYTVPPLLAAKILRIPIVLHEANSIPGKANKWLASMAWRVGIHFPFTATLLKGNTIEVGMPLREGYQLDQIDKIEALSYFGLSKNNSTLLVFGGSQGALAINRLMRNLANTWKNTPIQIIHITGSIQEADELKIFYANYQVKASVKAFEKNMHLAWRAAEVFISRSGASTIAEAMEFEVPGILIPYPHATDHHQDKNADFFVDIVKGGIKIVEEKAKPEIVLKSIQLLIDPIALDKRKSAIHSYKCRPDRTTLCELVLDTSELKSLHKAPQKRK.

Residues 12–14 (TGG), Asn-125, Arg-165, Ser-197, and Gln-296 each bind UDP-N-acetyl-alpha-D-glucosamine.

It belongs to the glycosyltransferase 28 family. MurG subfamily.

It localises to the cell inner membrane. The enzyme catalyses di-trans,octa-cis-undecaprenyl diphospho-N-acetyl-alpha-D-muramoyl-L-alanyl-D-glutamyl-meso-2,6-diaminopimeloyl-D-alanyl-D-alanine + UDP-N-acetyl-alpha-D-glucosamine = di-trans,octa-cis-undecaprenyl diphospho-[N-acetyl-alpha-D-glucosaminyl-(1-&gt;4)]-N-acetyl-alpha-D-muramoyl-L-alanyl-D-glutamyl-meso-2,6-diaminopimeloyl-D-alanyl-D-alanine + UDP + H(+). The protein operates within cell wall biogenesis; peptidoglycan biosynthesis. Cell wall formation. Catalyzes the transfer of a GlcNAc subunit on undecaprenyl-pyrophosphoryl-MurNAc-pentapeptide (lipid intermediate I) to form undecaprenyl-pyrophosphoryl-MurNAc-(pentapeptide)GlcNAc (lipid intermediate II). The sequence is that of UDP-N-acetylglucosamine--N-acetylmuramyl-(pentapeptide) pyrophosphoryl-undecaprenol N-acetylglucosamine transferase from Protochlamydia amoebophila (strain UWE25).